We begin with the raw amino-acid sequence, 554 residues long: (S)-1-hydroxy-N-methylcanadine 13-hydroxylase CYP82X2 (554 aa).

Residues 23–43 traverse the membrane as a helical segment; the sequence is IISTFIVTIISIVFLYTVLLI. Residue Cys-494 participates in heme binding.

This sequence belongs to the cytochrome P450 family. It depends on heme as a cofactor. Highly expressed in capsules. Expressed is stems.

Its subcellular location is the membrane. It catalyses the reaction (S)-1-hydroxy-N-methylcanadine + reduced [NADPH--hemoprotein reductase] + O2 = (13S,14R)-1,13-dihydroxy-N-methylcanadine + oxidized [NADPH--hemoprotein reductase] + H2O + H(+). It participates in alkaloid biosynthesis. Functionally, cytochrome P450 involved in the biosynthesis of the benzylisoquinoline alkaloid noscapine. Converts (S)-1-hydroxy-N-methylcanadine to (13S,14R)-1,13-dihydroxy-N-methylcanadine. This chain is (S)-1-hydroxy-N-methylcanadine 13-hydroxylase CYP82X2, found in Papaver somniferum (Opium poppy).